A 326-amino-acid polypeptide reads, in one-letter code: Vitamin B12 import system permease protein BtuC (326 aa).

Residues 1-10 (MLTLARQQQR) are Cytoplasmic-facing. The helical transmembrane segment at 11 to 35 (QNIRWLLCLSVLMLLALLLSLCAGE) threads the bilayer. Residues 36-56 (QWISPGDWFSPRGELFVWQIR) lie on the Periplasmic side of the membrane. The chain crosses the membrane as a helical span at residues 57–81 (LPRTLAVLLVGAALAISGAVMQALF). At 82–92 (ENPLAEPGLLG) the chain is on the cytoplasmic side. The chain crosses the membrane as a helical span at residues 93–107 (VSNGAGVGLIAAVLL). The Periplasmic portion of the chain corresponds to 108 to 113 (GQGQLP). Residues 114–138 (NWALGLCAIAGALIITLILLRFARR) form a helical membrane-spanning segment. Residues 139-141 (HLS) lie on the Cytoplasmic side of the membrane. The helical transmembrane segment at 142-166 (TSRLLLAGVALGIICSALMTWAIYF) threads the bilayer. Over 167–190 (STSVDLRQLMYWMMGGFGGVDWRQ) the chain is Periplasmic. Residues 191-206 (SWLMLALIPMLLWICC) traverse the membrane as a helical segment. Residues 207–228 (QSRPMNMLALGEISARQLGLPL) are Cytoplasmic-facing. A helical membrane pass occupies residues 229–249 (WFWRNVLVAATGWMVGVSVAL). Topologically, residues 250 to 257 (AGAIGFIG) are periplasmic. Residues 258-267 (LVIPHILRLC) form a helical membrane-spanning segment. Residues 268 to 274 (GLTDHRA) are Cytoplasmic-facing. A helical membrane pass occupies residues 275–296 (LLPGCALAGASALLLADIVARL). Residues 297–304 (ALAAAELP) are Periplasmic-facing. The helical transmembrane segment at 305 to 324 (IGVVTATLGAPVFIWLLLKA) threads the bilayer. Topologically, residues 325 to 326 (GR) are cytoplasmic.

The protein belongs to the binding-protein-dependent transport system permease family. FecCD subfamily. As to quaternary structure, the complex is composed of two ATP-binding proteins (BtuD), two transmembrane proteins (BtuC) and a solute-binding protein (BtuF).

The protein localises to the cell inner membrane. In terms of biological role, part of the ABC transporter complex BtuCDF involved in vitamin B12 import. Involved in the translocation of the substrate across the membrane. In Escherichia coli O157:H7, this protein is Vitamin B12 import system permease protein BtuC (btuC).